The primary structure comprises 447 residues: BAG family molecular chaperone regulator 5 (447 aa).

BAG domains follow at residues 9–86 (SISR…EQNA), 95–167 (QNIF…EDCM), 182–260 (SVAK…DLEE), 275–350 (SILK…DLKE), and 365–442 (SHKA…DLKS).

As to quaternary structure, binds to the ATPase domain of HSP/HSP70 chaperones. Binds PRKN. Interacts with HSPA8 and JPH2. Expressed in the heart.

Its function is as follows. Co-chaperone for HSP/HSP70 proteins. It functions as a nucleotide-exchange factor promoting the release of ADP from HSP70, thereby activating HSP70-mediated protein refolding. Has an essential role in maintaining proteostasis at junctional membrane complexes (JMC), where it may function as a scaffold between the HSPA8 chaperone and JMC proteins enabling correct, HSPA8-dependent JMC protein folding. Inhibits both auto-ubiquitination of PRKN and ubiquitination of target proteins by PRKN. This Homo sapiens (Human) protein is BAG family molecular chaperone regulator 5 (BAG5).